The following is a 221-amino-acid chain: uncharacterized protein (221 aa).

The tract at residues Met1–Pro30 is disordered. The span at Arg12–Arg25 shows a compositional bias: polar residues. A helical transmembrane segment spans residues Val37–Ile57.

The protein localises to the membrane. This is an uncharacterized protein from Arabidopsis thaliana (Mouse-ear cress).